Here is a 395-residue protein sequence, read N- to C-terminus: Chorismate synthase (395 aa).

The NADP(+) site is built by Arg40 and Arg46. FMN is bound by residues Arg134–Ser136, Gln256–Ala257, Gly301, Lys316–Thr320, and Arg342.

This sequence belongs to the chorismate synthase family. As to quaternary structure, homotetramer. Requires FMNH2 as cofactor.

It carries out the reaction 5-O-(1-carboxyvinyl)-3-phosphoshikimate = chorismate + phosphate. The protein operates within metabolic intermediate biosynthesis; chorismate biosynthesis; chorismate from D-erythrose 4-phosphate and phosphoenolpyruvate: step 7/7. In terms of biological role, catalyzes the anti-1,4-elimination of the C-3 phosphate and the C-6 proR hydrogen from 5-enolpyruvylshikimate-3-phosphate (EPSP) to yield chorismate, which is the branch point compound that serves as the starting substrate for the three terminal pathways of aromatic amino acid biosynthesis. This reaction introduces a second double bond into the aromatic ring system. In Beutenbergia cavernae (strain ATCC BAA-8 / DSM 12333 / CCUG 43141 / JCM 11478 / NBRC 16432 / NCIMB 13614 / HKI 0122), this protein is Chorismate synthase.